The following is a 435-amino-acid chain: Phosphomethylpyrimidine synthase (435 aa).

Residues Asn-67, Met-96, Tyr-125, His-163, 185–187, 226–229, and Glu-265 contribute to the substrate site; these read SRG and DGLR. His-269 is a Zn(2+) binding site. Tyr-292 is a binding site for substrate. His-333 contributes to the Zn(2+) binding site. [4Fe-4S] cluster contacts are provided by Cys-408, Cys-411, and Cys-415.

The protein belongs to the ThiC family. The cofactor is [4Fe-4S] cluster.

It catalyses the reaction 5-amino-1-(5-phospho-beta-D-ribosyl)imidazole + S-adenosyl-L-methionine = 4-amino-2-methyl-5-(phosphooxymethyl)pyrimidine + CO + 5'-deoxyadenosine + formate + L-methionine + 3 H(+). The protein operates within cofactor biosynthesis; thiamine diphosphate biosynthesis. Catalyzes the synthesis of the hydroxymethylpyrimidine phosphate (HMP-P) moiety of thiamine from aminoimidazole ribotide (AIR) in a radical S-adenosyl-L-methionine (SAM)-dependent reaction. This chain is Phosphomethylpyrimidine synthase, found in Thermus thermophilus (strain ATCC 27634 / DSM 579 / HB8).